Here is a 220-residue protein sequence, read N- to C-terminus: Probable GTP-binding protein EngB (220 aa).

Positions 26–200 constitute an EngB-type G domain; that stretch reads EGIEIAFAGR…RAKLDEWYAP (175 aa). Residues 34–41, 61–65, 79–82, 146–149, and 179–181 contribute to the GTP site; these read GRSNTGKS, GRTQL, DLPG, TKAD, and FSS. Positions 41 and 63 each coordinate Mg(2+).

This sequence belongs to the TRAFAC class TrmE-Era-EngA-EngB-Septin-like GTPase superfamily. EngB GTPase family. Mg(2+) is required as a cofactor.

In terms of biological role, necessary for normal cell division and for the maintenance of normal septation. The chain is Probable GTP-binding protein EngB from Vibrio cholerae serotype O1 (strain ATCC 39541 / Classical Ogawa 395 / O395).